Reading from the N-terminus, the 202-residue chain is Imidazoleglycerol-phosphate dehydratase (202 aa).

This sequence belongs to the imidazoleglycerol-phosphate dehydratase family.

It localises to the cytoplasm. It carries out the reaction D-erythro-1-(imidazol-4-yl)glycerol 3-phosphate = 3-(imidazol-4-yl)-2-oxopropyl phosphate + H2O. It participates in amino-acid biosynthesis; L-histidine biosynthesis; L-histidine from 5-phospho-alpha-D-ribose 1-diphosphate: step 6/9. This is Imidazoleglycerol-phosphate dehydratase from Sinorhizobium medicae (strain WSM419) (Ensifer medicae).